A 357-amino-acid chain; its full sequence is DNA polymerase IV 2 (357 aa).

Residues 4-184 (IIHVDMDAFY…LAVKKFHGVG (181 aa)) enclose the UmuC domain. Residues D8 and D102 each contribute to the Mg(2+) site. Residue E103 is part of the active site.

The protein belongs to the DNA polymerase type-Y family. Monomer. Mg(2+) is required as a cofactor.

The protein resides in the cytoplasm. It catalyses the reaction DNA(n) + a 2'-deoxyribonucleoside 5'-triphosphate = DNA(n+1) + diphosphate. In terms of biological role, poorly processive, error-prone DNA polymerase involved in untargeted mutagenesis. Copies undamaged DNA at stalled replication forks, which arise in vivo from mismatched or misaligned primer ends. These misaligned primers can be extended by PolIV. Exhibits no 3'-5' exonuclease (proofreading) activity. May be involved in translesional synthesis, in conjunction with the beta clamp from PolIII. This is DNA polymerase IV 2 (dinB2) from Agrobacterium fabrum (strain C58 / ATCC 33970) (Agrobacterium tumefaciens (strain C58)).